Here is a 447-residue protein sequence, read N- to C-terminus: Argininosuccinate synthase (447 aa).

Residues 17-25 and Ala-43 each bind ATP; that span reads AFSGGLDTS. L-citrulline is bound at residue Tyr-99. ATP is bound by residues Gly-129 and Thr-131. Thr-131, Asn-135, and Asp-136 together coordinate L-aspartate. Residue Asn-135 participates in L-citrulline binding. Asp-136 provides a ligand contact to ATP. Residues Arg-139 and Ser-192 each coordinate L-citrulline. ATP is bound at residue Asp-194. L-citrulline contacts are provided by Thr-201, Glu-203, and Glu-280.

The protein belongs to the argininosuccinate synthase family. Type 2 subfamily. Homotetramer.

The protein localises to the cytoplasm. It carries out the reaction L-citrulline + L-aspartate + ATP = 2-(N(omega)-L-arginino)succinate + AMP + diphosphate + H(+). The protein operates within amino-acid biosynthesis; L-arginine biosynthesis; L-arginine from L-ornithine and carbamoyl phosphate: step 2/3. This chain is Argininosuccinate synthase, found in Shigella flexneri serotype 5b (strain 8401).